A 117-amino-acid polypeptide reads, in one-letter code: Protein Turandot F (117 aa).

The N-terminal stretch at 1 to 22 (MKTVILFSFLLVLLGYLGAGHA) is a signal peptide.

This sequence belongs to the Turandot family.

Its subcellular location is the secreted. Functionally, a humoral factor that may play a role in stress tolerance. In Drosophila sechellia (Fruit fly), this protein is Protein Turandot F.